Here is a 451-residue protein sequence, read N- to C-terminus: Hexokinase (451 aa).

In terms of domain architecture, Hexokinase spans 6-445; that stretch reads QQLFEKVVEI…SGKGAAAIAA (440 aa). The tract at residues 63-195 is hexokinase small subdomain; that stretch reads NGTETGNFLA…ELNVKCVAVV (133 aa). Residue 74 to 79 coordinates ATP; that stretch reads DLGGTN. Residues Ser-144, 161–162, 196–197, 222–223, Glu-249, and Glu-283 each bind substrate; these read TK, ND, and TN. The segment at 196–434 is hexokinase large subdomain; it reads NDTVGTLASC…TRFCLRLSED (239 aa). Residues 288–289, 325–329, and 401–405 each bind ATP; these read GM, TRYLT, and SLYKF.

It belongs to the hexokinase family. As to quaternary structure, monomer.

The catalysed reaction is a D-hexose + ATP = a D-hexose 6-phosphate + ADP + H(+). The enzyme catalyses D-mannose + ATP = D-mannose 6-phosphate + ADP + H(+). It carries out the reaction D-fructose + ATP = D-fructose 6-phosphate + ADP + H(+). It catalyses the reaction D-glucose + ATP = D-glucose 6-phosphate + ADP + H(+). It functions in the pathway carbohydrate metabolism; hexose metabolism. The protein operates within carbohydrate degradation; glycolysis; D-glyceraldehyde 3-phosphate and glycerone phosphate from D-glucose: step 1/4. Functionally, catalyzes the phosphorylation of various hexoses to hexose 6-phosphate. This chain is Hexokinase, found in Schistosoma mansoni (Blood fluke).